The chain runs to 871 residues: Rho guanine nucleotide exchange factor 26 (871 aa).

Disordered regions lie at residues 1 to 49, 86 to 233, and 288 to 310; these read MDGE…LLIT, AQRR…NPSV, and PLGH…SLRR. Position 22 is a phosphoserine (serine 22). The segment covering 136 to 156 has biased composition (pro residues); that stretch reads PAPPPPPVLRPPRTPNAPAPC. Residues 173–192 are compositionally biased toward polar residues; sequence PTANGLAANNDSPGSGSQSG. Residue serine 392 is modified to Phosphoserine. Residues 439–623 enclose the DH domain; it reads KRQEAIFEVI…SKLVRLCNEG (185 aa). Residues 655-782 enclose the PH domain; it reads WLVKRGELTA…WITALGHSSG (128 aa). In terms of domain architecture, SH3 spans 789–850; sequence TSLTQVEIVR…PMECAKEITC (62 aa).

Interacts with ICAM1 and RHOG. In terms of tissue distribution, isoform 1 is broadly expressed, with highest levels in liver (at protein level). Certain mRNA species appear to be specifically expressed in prostate and liver.

Its subcellular location is the cell projection. It is found in the ruffle. Activates RhoG GTPase by promoting the exchange of GDP by GTP. Required for the formation of membrane ruffles during macropinocytosis. Required for the formation of cup-like structures during trans-endothelial migration of leukocytes. In case of Salmonella enterica infection, activated by SopB, which induces cytoskeleton rearrangements and promotes bacterial entry. This chain is Rho guanine nucleotide exchange factor 26 (ARHGEF26), found in Homo sapiens (Human).